The following is a 609-amino-acid chain: tRNA 5-methylaminomethyl-2-thiouridine biosynthesis bifunctional protein MnmC (609 aa).

The segment at 1–229 is tRNA (mnm(5)s(2)U34)-methyltransferase; that stretch reads MVELAAATCL…TRNTLPARAM (229 aa). The interval 237-609 is FAD-dependent cmnm(5)s(2)U34 oxidoreductase; it reads IGAGLAGASV…SPELPVSCAP (373 aa).

It in the N-terminal section; belongs to the methyltransferase superfamily. tRNA (mnm(5)s(2)U34)-methyltransferase family. In the C-terminal section; belongs to the DAO family. It depends on FAD as a cofactor.

It is found in the cytoplasm. It catalyses the reaction 5-aminomethyl-2-thiouridine(34) in tRNA + S-adenosyl-L-methionine = 5-methylaminomethyl-2-thiouridine(34) in tRNA + S-adenosyl-L-homocysteine + H(+). Functionally, catalyzes the last two steps in the biosynthesis of 5-methylaminomethyl-2-thiouridine (mnm(5)s(2)U) at the wobble position (U34) in tRNA. Catalyzes the FAD-dependent demodification of cmnm(5)s(2)U34 to nm(5)s(2)U34, followed by the transfer of a methyl group from S-adenosyl-L-methionine to nm(5)s(2)U34, to form mnm(5)s(2)U34. The sequence is that of tRNA 5-methylaminomethyl-2-thiouridine biosynthesis bifunctional protein MnmC (mnmC) from Albidiferax ferrireducens (strain ATCC BAA-621 / DSM 15236 / T118) (Rhodoferax ferrireducens).